A 415-amino-acid polypeptide reads, in one-letter code: Vascular endothelial growth factor C (415 aa).

A signal peptide spans M1–A31. A propeptide spanning residues F32–A107 is cleaved from the precursor. Disulfide bonds link C127-C169, C158-C205, and C162-C207. N-linked (GlcNAc...) asparagine glycans are attached at residues N171, N201, and N236. Residues S224 to N415 constitute a propeptide that is removed on maturation. A run of 4 repeats spans residues C276 to C291, C300 to C315, C324 to C339, and C343 to C358. Positions C276 to C358 are 4 X 16 AA repeats of C-X(10)-C-X-C-X(1,3)-C.

This sequence belongs to the PDGF/VEGF growth factor family. As to quaternary structure, homodimer; non-covalent and antiparallel. Interacts with FLT4/VEGFR3; the interaction is required for FLT4/VEGFR3 homodimarization and activation. Post-translationally, undergoes a complex proteolytic maturation which generates a variety of processed secreted forms with increased activity toward VEGFR-3, but only the fully processed form could activate VEGFR-2. VEGF-C first form an antiparallel homodimer linked by disulfide bonds. Before secretion, a cleavage occurs between Arg-223 and Ser-224 producing a heterotetramer. The next extracellular step of the processing removes the N-terminal propeptide. Finally the mature VEGF-C is composed mostly of two VEGF homology domains (VHDs) bound by non-covalent interactions. Expressed in adult heart, brain, spleen, lung, liver, skeletal muscle, kidney, testis and intestine with higher levels in heart, brain and kidney. Isoform 4 levels are very low. Isoform 3 is mostly expressed in liver and has reduced expression level in other tissues. Isoform 2 is mostly expressed in brain and kidney, although a lower level expression in other tissues is also detectable.

It is found in the secreted. Its function is as follows. Growth factor active in angiogenesis, and endothelial cell growth, stimulating their proliferation and migration and also has effects on the permeability of blood vessels. May function in angiogenesis of the venous and lymphatic vascular systems during embryogenesis, and also in the maintenance of differentiated lymphatic endothelium in adults. Binds and activates KDR/VEGFR2 and FLT4/VEGFR3 receptors. The sequence is that of Vascular endothelial growth factor C (Vegfc) from Mus musculus (Mouse).